The primary structure comprises 349 residues: Meiotic recombination protein DMC1 homolog (349 aa).

138–145 is an ATP binding site; it reads GEFRSGKT. R240 is a dsDNA binding site. 5 residues coordinate ssDNA: R240, F243, R246, R252, and R320. DsDNA-binding residues include R246 and R252.

The protein belongs to the RecA family. DMC1 subfamily. Double stacked ring-shaped homooctamer.

Its subcellular location is the nucleus. In terms of biological role, may participate in meiotic recombination. This is Meiotic recombination protein DMC1 homolog (LIM15) from Lilium longiflorum (Trumpet lily).